Reading from the N-terminus, the 355-residue chain is Guanine nucleotide-binding protein G(q) subunit alpha (355 aa).

The S-palmitoyl cysteine moiety is linked to residue C3. One can recognise a G-alpha domain in the interval 32 to 355 (KEIKLLLLGT…QHITEVVPGL (324 aa)). The interval 35–48 (KLLLLGTGESGKST) is G1 motif. GTP contacts are provided by residues 40–47 (GTGESGKS), 174–180 (LRVRVPT), 199–203 (DVGGQ), 269–272 (NKKD), and A326. 2 residues coordinate Mg(2+): S47 and T180. The segment at 172-180 (DVLRVRVPT) is G2 motif. The G3 motif stretch occupies residues 195 to 204 (FKMVDVGGQR). Residues 265-272 (ILFLNKKD) are G4 motif. Residues 324-329 (TCATDT) are G5 motif.

It belongs to the G-alpha family. G(q) subfamily. G proteins are composed of 3 units; alpha, beta and gamma. The alpha chain contains the guanine nucleotide binding site.

Guanine nucleotide-binding proteins (G proteins) are involved as modulators or transducers in various transmembrane signaling systems. The polypeptide is Guanine nucleotide-binding protein G(q) subunit alpha (Geodia cydonium (Sponge)).